A 339-amino-acid polypeptide reads, in one-letter code: UDP-glucose 4-epimerase (339 aa).

NAD(+) is bound by residues 12-13 (FI), 32-37 (DNLCNS), 59-60 (DI), 81-85 (FAGLK), asparagine 100, serine 125, tyrosine 150, lysine 154, and phenylalanine 179. Residues serine 125 and tyrosine 150 each contribute to the substrate site. The active-site Proton acceptor is tyrosine 150. Residues asparagine 180, 200–201 (NL), 217–219 (SVF), arginine 232, and 293–296 (RAGD) contribute to the substrate site.

This sequence belongs to the NAD(P)-dependent epimerase/dehydratase family. In terms of assembly, homodimer. NAD(+) is required as a cofactor.

It catalyses the reaction UDP-alpha-D-glucose = UDP-alpha-D-galactose. It functions in the pathway carbohydrate metabolism; galactose metabolism. In terms of biological role, involved in the metabolism of galactose. Plays an essential role in the incorporation of galactose into meningococcal lipopolysaccharide surface molecules, which are important for pathogenesis. Catalyzes the conversion of UDP-galactose (UDP-Gal) to UDP-glucose (UDP-Glc) through a mechanism involving the transient reduction of NAD. The protein is UDP-glucose 4-epimerase (galE) of Neisseria meningitidis serogroup A / serotype 4A (strain DSM 15465 / Z2491).